The following is a 103-amino-acid chain: Large ribosomal subunit protein uL24 (103 aa).

Belongs to the universal ribosomal protein uL24 family. As to quaternary structure, part of the 50S ribosomal subunit.

Functionally, one of two assembly initiator proteins, it binds directly to the 5'-end of the 23S rRNA, where it nucleates assembly of the 50S subunit. In terms of biological role, one of the proteins that surrounds the polypeptide exit tunnel on the outside of the subunit. In Dehalococcoides mccartyi (strain ATCC BAA-2266 / KCTC 15142 / 195) (Dehalococcoides ethenogenes (strain 195)), this protein is Large ribosomal subunit protein uL24.